Consider the following 193-residue polypeptide: Probable nicotinate-nucleotide adenylyltransferase (193 aa).

This sequence belongs to the NadD family.

The catalysed reaction is nicotinate beta-D-ribonucleotide + ATP + H(+) = deamido-NAD(+) + diphosphate. It functions in the pathway cofactor biosynthesis; NAD(+) biosynthesis; deamido-NAD(+) from nicotinate D-ribonucleotide: step 1/1. Its function is as follows. Catalyzes the reversible adenylation of nicotinate mononucleotide (NaMN) to nicotinic acid adenine dinucleotide (NaAD). The sequence is that of Probable nicotinate-nucleotide adenylyltransferase from Chlorobium phaeovibrioides (strain DSM 265 / 1930) (Prosthecochloris vibrioformis (strain DSM 265)).